The chain runs to 495 residues: MRLIVPLRGVIQGRGGLFVGSLIPCCLFYFLQLYLKRRRPPPSDPTDLPRTFSRTNLFSRGNSIGRVRVSSRAVPVAKPSDSPYYIGLERVKTDPYDRITNTDGIIQLGLAESTLCFDLLQRWMSENLMESMMQSDDGEFDISSIAMYKPFEGLLELRVAFADFMSRIMGGNVSFDPSNMVITAGGTPAIEVLAFCLADHGNAFLIPTPYYPGFDRDIKFRTGVELIPVHCRSSDNFTVTVSALEQALNQARKRGSKVSGILFSNPSNPVGNILSRETLCDILRFAQEKNIHVISDEIFAGSVYGDKEFVSMAEIAGSGEFDKTRVHIIYGLSKDLSIPGFRAGVIYSFHEDVVNAAKKLMRFSSVPVLVQRILISLLSDVRFIEGYMAAHRQRIRDKHIRFVEGLKQLGIPCAESGGGLYCWVDMSSLLTSYSEKGELELFEKLLTVAKINATPGTACYCIEPGWFRCCFTALADEDIPVIMERIRQLAESFRS.

Lysine 334 bears the N6-(pyridoxal phosphate)lysine mark.

Belongs to the class-I pyridoxal-phosphate-dependent aminotransferase family. Homodimer. Pyridoxal 5'-phosphate is required as a cofactor. Expressed in roots. Expressed at low level in leaves, stems, flowers and siliques.

Probable aminotransferase. Does not have 1-aminocyclopropane-1-carboxylate synthase (ACS) activity, suggesting that it is not involved in ethylene biosynthesis. The polypeptide is Probable aminotransferase ACS12 (ACS12) (Arabidopsis thaliana (Mouse-ear cress)).